Consider the following 385-residue polypeptide: 8-amino-7-oxononanoate synthase (385 aa).

Arg-21 provides a ligand contact to substrate. 108 to 109 (GY) is a pyridoxal 5'-phosphate binding site. Position 133 (His-133) interacts with substrate. Pyridoxal 5'-phosphate is bound by residues Ser-179, His-207, and Thr-233. The residue at position 236 (Lys-236) is an N6-(pyridoxal phosphate)lysine. Substrate is bound at residue Thr-350.

Belongs to the class-II pyridoxal-phosphate-dependent aminotransferase family. BioF subfamily. As to quaternary structure, homodimer. The cofactor is pyridoxal 5'-phosphate.

It carries out the reaction 6-carboxyhexanoyl-[ACP] + L-alanine + H(+) = (8S)-8-amino-7-oxononanoate + holo-[ACP] + CO2. The protein operates within cofactor biosynthesis; biotin biosynthesis. Catalyzes the decarboxylative condensation of pimeloyl-[acyl-carrier protein] and L-alanine to produce 8-amino-7-oxononanoate (AON), [acyl-carrier protein], and carbon dioxide. The polypeptide is 8-amino-7-oxononanoate synthase (Pectobacterium atrosepticum (strain SCRI 1043 / ATCC BAA-672) (Erwinia carotovora subsp. atroseptica)).